A 323-amino-acid chain; its full sequence is Protein translocase subunit SecF (323 aa).

The Cytoplasmic segment spans residues 1 to 22; that stretch reads MAQEYTVEQLNHGRKVYDFMRW. The chain crosses the membrane as a helical span at residues 23 to 43; sequence DYWAFGISGLLLIAAIVIMGV. Over 44–142 the chain is Periplasmic; that stretch reads RGFNWGLDFT…FVGPSVGADL (99 aa). A helical transmembrane segment spans residues 143-163; it reads AQTGAMALMAALLSILVYVGF. The Cytoplasmic portion of the chain corresponds to 164–170; the sequence is RFEWRLA. Residues 171–191 traverse the membrane as a helical segment; it reads AGVVIALAHDVIITLGILSLF. At 192-196 the chain is on the periplasmic side; it reads HIEID. The helical transmembrane segment at 197–217 threads the bilayer; it reads LTIVASLMSVIGYSLNDSIVV. At 218 to 247 the chain is on the cytoplasmic side; that stretch reads SDRIRENFRKIRRGTPYEIFNVSLTQTLHR. The helical transmembrane segment at 248 to 270 threads the bilayer; sequence TLITSGTTLMVILMLYLFGGPVL. At 271–280 the chain is on the periplasmic side; that stretch reads EGFSLTMLIG. The helical transmembrane segment at 281–301 threads the bilayer; that stretch reads VSIGTASSIYVASALALKLGM. Topologically, residues 302-323 are cytoplasmic; that stretch reads KREHMLQQKVEKEGADQPSILP.

This sequence belongs to the SecD/SecF family. SecF subfamily. Forms a complex with SecD. Part of the essential Sec protein translocation apparatus which comprises SecA, SecYEG and auxiliary proteins SecDF-YajC and YidC.

The protein resides in the cell inner membrane. Its function is as follows. Part of the Sec protein translocase complex. Interacts with the SecYEG preprotein conducting channel. SecDF uses the proton motive force (PMF) to complete protein translocation after the ATP-dependent function of SecA. The protein is Protein translocase subunit SecF of Escherichia coli O157:H7.